Consider the following 371-residue polypeptide: Protein arginine N-methyltransferase 1 (371 aa).

The SAM-dependent MTase PRMT-type domain maps to 50–361 (KDYYFDSYAH…DLDFKGQLCE (312 aa)). Residues histidine 63, arginine 72, glycine 96, and glutamate 118 each contribute to the S-adenosyl-L-methionine site. Arginine 72 contributes to the S-adenosyl-L-homocysteine binding site. Glutamate 118 lines the S-adenosyl-L-homocysteine pocket. Residue lysine 134 is modified to N6-succinyllysine. Residue lysine 145 forms a Glycyl lysine isopeptide (Lys-Gly) (interchain with G-Cter in ubiquitin) linkage. Valine 146 and glutamate 147 together coordinate S-adenosyl-L-homocysteine. Glutamate 147 serves as a coordination point for S-adenosyl-L-methionine. Residues glutamate 162 and glutamate 171 contribute to the active site. Residues lysine 228 and lysine 233 each carry the N6-acetyllysine modification. Serine 304 and serine 307 each carry phosphoserine.

The protein belongs to the class I-like SAM-binding methyltransferase superfamily. Protein arginine N-methyltransferase family. In terms of assembly, homodimer. Homooctamer; individual homodimers associates to form a homooctamer. Individual homodimers can associate to form a homohexamer. Heterodimer with PRMT8. Interacts with BTG1, BTG2, NFATC2IP and IFNAR1. Interacts with and methylates CHTOP, thereby enabling the interaction of CHTOP with the 5FMC complex. Interacts with ILF3 and SUPT5H. Interacts with and methylates FOXO1, leading to the nuclear retention of FOXO1 and the stimulation of FOXO1 transcriptional activity. Methylation of FOXO1 is increased upon oxidative stress. Interacts with and probably methylates ATXN2L. Component of the methylosome, a 20S complex containing at least CLNS1A/pICln, PRMT5/SKB1, WDR77/MEP50, PRMT1 and ERH. Interacts with DHX9 (via RGG region). Interacts (via N-terminus) with HABP4. Interacts with MAP3K5/ASK1; the interaction results in MAP3K5 methylation by PRMT1 which inhibits MAP3K5 activation. Interacts with TRIM48; the interaction results in ubiquitination of PRMT1 by TRIM48, leading to PRMT1 proteasomal degradation and activation of MAP3K5. Interacts with GATOR1 complex; this interaction is S-adenosyl-L-methionine (SAM) dependent and is perturbated by SAMTOR in a SAM-sensitive manner. Interacts with GFI1; promoting recognition and binding of MRE11 and TP53BP1 substrates by PRMT1. In terms of processing, polyubiquitinated at Lys-145 by the SCF(FBXL17) complex, leading to its subsequent degradation. Ubiquitination is regulated by acetylation at Lys-228 and Lys-233. Polyubiquitinated by E3 ubiquitin-protein ligase TRIM48, leading to suppression of MAP3K5/ASK1 methylation and subsequent MAP3K5 activation. Acetylation at Lys-228 and Lys-233 regulates ubiquitination by the SCF(FBXL17) complex. Acetylated at Lys-233 by p300/EP300. Deacetylated at Lys-228 and Lys-233 by SIRT1. In terms of tissue distribution, widely expressed. Expressed strongly in colorectal cancer cells (at protein level). Expressed strongly in colorectal cancer tissues compared to wild-type colon samples (at protein level). Expressed strongly in colorectal cancer tissues compared to wild-type colon samples.

The protein resides in the nucleus. It is found in the nucleoplasm. Its subcellular location is the cytoplasm. The protein localises to the cytosol. It localises to the lysosome membrane. The catalysed reaction is L-arginyl-[protein] + 2 S-adenosyl-L-methionine = N(omega),N(omega)-dimethyl-L-arginyl-[protein] + 2 S-adenosyl-L-homocysteine + 2 H(+). The enzyme catalyses L-arginyl-[protein] + S-adenosyl-L-methionine = N(omega)-methyl-L-arginyl-[protein] + S-adenosyl-L-homocysteine + H(+). It catalyses the reaction N(omega)-methyl-L-arginyl-[protein] + S-adenosyl-L-methionine = N(omega),N(omega)-dimethyl-L-arginyl-[protein] + S-adenosyl-L-homocysteine + H(+). Arginine methyltransferase that methylates (mono and asymmetric dimethylation) the guanidino nitrogens of arginyl residues present in proteins such as ESR1, histone H2, H3 and H4, FMR1, ILF3, HNRNPA1, HNRNPD, NFATC2IP, SUPT5H, TAF15, EWS, HABP4, SERBP1, RBM15, FOXO1, CHTOP, MAP3K5/ASK1, MICU1 and NPRL2. Constitutes the main enzyme that mediates monomethylation and asymmetric dimethylation of histone H4 'Arg-3' (H4R3me1 and H4R3me2a, respectively), a specific tag for epigenetic transcriptional activation. May be involved in the regulation of TAF15 transcriptional activity, act as an activator of estrogen receptor (ER)-mediated transactivation, play a key role in neurite outgrowth and act as a negative regulator of megakaryocytic differentiation, by modulating p38 MAPK pathway. Methylates RBM15, promoting ubiquitination and degradation of RBM15. Methylates MRE11 and TP53BP1, promoting the DNA damage response. Methylates FOXO1 and retains it in the nucleus increasing its transcriptional activity. Methylates CHTOP and this methylation is critical for its 5-hydroxymethylcytosine (5hmC)-binding activity. Methylates MAP3K5/ASK1 at 'Arg-78' and 'Arg-80' which promotes association of MAP3K5 with thioredoxin and negatively regulates MAP3K5 association with TRAF2, inhibiting MAP3K5 stimulation and MAP3K5-induced activation of JNK. Methylates H4R3 in genes involved in glioblastomagenesis in a CHTOP- and/or TET1-dependent manner. Plays a role in regulating alternative splicing in the heart. Methylates NPRL2 at 'Arg-78' leading to inhibition of its GTPase activator activity and then the GATOR1 complex and consequently inducing timely mTORC1 activation under methionine-sufficient conditions. This chain is Protein arginine N-methyltransferase 1, found in Homo sapiens (Human).